A 78-amino-acid chain; its full sequence is Cytochrome b-c1 complex subunit 10, mitochondrial (78 aa).

The Mitochondrial matrix segment spans residues 1 to 26 (MVSYVKGPAYKALSHFGKLNAPLVRS). A helical transmembrane segment spans residues 27-46 (YIPNLVFWGAAAGGAVATFT). At 47–78 (EGVPLFQKTFYEKIPFFGQHWIYNPDPEDVPV) the chain is on the mitochondrial intermembrane side.

The protein belongs to the UQCR11/QCR10 family. Component of the ubiquinol-cytochrome c oxidoreductase (cytochrome b-c1 complex, complex III, CIII), a multisubunit enzyme composed of 10 subunits. The complex is composed of 3 respiratory subunits cytochrome b (COB), cytochrome c1 (CYT1) and Rieske protein (RIP1), 2 core protein subunits COR1 and QCR2, and 5 low-molecular weight protein subunits QCR6, QCR7, QCR8, QCR9 and QCR10. The complex exists as an obligatory dimer and forms supercomplexes (SCs) in the inner mitochondrial membrane with a monomer or a dimer of cytochrome c oxidase (complex IV, CIV), resulting in 2 different assemblies (supercomplexes III(2)IV and III(2)IV(2)).

Its subcellular location is the mitochondrion inner membrane. Component of the ubiquinol-cytochrome c oxidoreductase, a multisubunit transmembrane complex that is part of the mitochondrial electron transport chain which drives oxidative phosphorylation. The complex plays an important role in the uptake of multiple carbon sources present in different host niches. In Candida albicans (strain SC5314 / ATCC MYA-2876) (Yeast), this protein is Cytochrome b-c1 complex subunit 10, mitochondrial.